Reading from the N-terminus, the 497-residue chain is Thiamine transporter 1 (497 aa).

Met-1 is subject to N-acetylmethionine. The Cytoplasmic segment spans residues 1 to 28; that stretch reads MDVPGPVSRRAAAAAATVLLRTARVRRE. Residues 29-46 form a helical membrane-spanning segment; sequence CWFLPTALLCAYGFFASL. The Extracellular portion of the chain corresponds to 47-72; that stretch reads RPSEPFLTPYLLGPDKNLTEREVFNE. An N-linked (GlcNAc...) asparagine glycan is attached at Asn-63. A helical membrane pass occupies residues 73–91; the sequence is IYPVWTYSYLVLLFPVFLA. The Cytoplasmic portion of the chain corresponds to 92–99; it reads TDYLRYKP. A helical membrane pass occupies residues 100–118; it reads VVLLQGLSLIVTWFMLLYA. Residues 119–128 are Extracellular-facing; the sequence is QGLLAIQFLE. A helical transmembrane segment spans residues 129 to 149; it reads FFYGIATATEIAYYSYIYSVV. Over 150 to 165 the chain is Cytoplasmic; sequence DLGMYQKVTSYCRSAT. The helical transmembrane segment at 166–185 threads the bilayer; sequence LVGFTVGSVLGQILVSVAGW. The Extracellular segment spans residues 186–191; sequence SLFSLN. A helical transmembrane segment spans residues 192–208; the sequence is VISLTCVSVAFAVAWFL. Topologically, residues 209–285 are cytoplasmic; sequence PMPQKSLFFH…LLVLKVLWND (77 aa). Phosphoserine is present on Ser-222. A helical transmembrane segment spans residues 286–310; that stretch reads FLMCYSSRPLLCWSVWWALSTCGYF. The Extracellular portion of the chain corresponds to 311–337; it reads QVVNYTQGLWEKVMPSRYAAIYNGGVE. Residue Asn-314 is glycosylated (N-linked (GlcNAc...) asparagine). The chain crosses the membrane as a helical span at residues 338–354; sequence AVSTLLGAVAVFAVGYI. At 355-363 the chain is on the cytoplasmic side; the sequence is KISWSTWGE. The chain crosses the membrane as a helical span at residues 364–380; sequence MTLSLFSLLIAAAVYIM. The Extracellular portion of the chain corresponds to 381 to 386; it reads DTVGNI. The chain crosses the membrane as a helical span at residues 387 to 409; it reads WVCYASYVVFRIIYMLLITIATF. Residues 410–419 are Cytoplasmic-facing; the sequence is QIAANLSMER. Residues 420–443 form a helical membrane-spanning segment; the sequence is YALVFGVNTFIALALQTLLTLIVV. At 444-455 the chain is on the extracellular side; sequence DASGLGLEITTQ. A helical transmembrane segment spans residues 456–479; sequence FLIYASYFALIAVVFLASGAVSVM. Residues 480-497 are Cytoplasmic-facing; sequence KKCRKLEDPQSSSQVTTS.

Belongs to the reduced folate carrier (RFC) transporter (TC 2.A.48) family. In terms of assembly, interacts with TSPAN1; this interaction increases the stability of SLC19A2. Interacts with TMEM63B. As to expression, ubiquitous; most abundant in skeletal and cardiac muscle. Medium expression in placenta, heart, liver and kidney, low in lung.

The protein localises to the cell membrane. The catalysed reaction is thiamine(out) + H(+)(in) = thiamine(in) + H(+)(out). It carries out the reaction pyridoxine(out) + n H(+)(out) = pyridoxine(in) + n H(+)(in). Its activity is regulated as follows. Pyridoxine transport is inhibited by carbonyl cyanide p-trifluoromethoxyphenylhydrazone (FCCP) and carbonyl cyanide m-chlorophenylhydrazone (CCCP). Functionally, high-affinity transporter for the intake of thiamine. Mediates H(+)-dependent pyridoxine transport. This chain is Thiamine transporter 1 (SLC19A2), found in Homo sapiens (Human).